Consider the following 747-residue polypeptide: H(+)/Cl(-) exchange transporter 4 (747 aa).

The segment at 1–50 (MDFLEEPFPDVGTYEDFHTIDWLREKSRDTDRHRKITSKSKESIWEFIKS) is required for localization in the endoplasmic reticulum. The Cytoplasmic portion of the chain corresponds to 1–54 (MDFLEEPFPDVGTYEDFHTIDWLREKSRDTDRHRKITSKSKESIWEFIKSLLDA). 2 helical membrane-spanning segments follow: residues 55 to 92 (WSGW…VCLS) and 138 to 161 (LNYL…VRVF). The Selectivity filter part_1 signature appears at 167–171 (GSGIP). Chloride is bound at residue S168. An intramembrane region (helical) is located at residues 170–177 (IPEIKTIL). Helical transmembrane passes span 187-205 (GKWT…VSSG) and 211-230 (EGPL…SLFS). A Selectivity filter part_2 motif is present at residues 209–213 (GKEGP). 2 intramembrane regions (helical) span residues 242 to 254 (VLSA…VSVA) and 258 to 266 (PIGGVLFSL). 5 consecutive transmembrane segments (helical) span residues 278–296 (LWRS…RSIN), 320–345 (FPFI…AWCR), 352–372 (LGRY…IVAY), 429–449 (MWQL…TFGM), and 454–473 (GLFI…VGIG). The Selectivity filter part_3 motif lies at 454 to 458 (GLFIP). F456 provides a ligand contact to chloride. Intramembrane regions (helical) lie at residues 501–515 (GLYA…LGGV) and 519–530 (TVSLVVIMFELT). The note=Loop between two helices intramembrane region spans 531–534 (GGLE). A helical transmembrane segment spans residues 535-553 (YIVPLMAAAVTSKWVADAF). Topologically, residues 554–747 (GKEGIYEAHI…NQDPESIMFN (194 aa)) are cytoplasmic. Y559 contacts chloride. 2 consecutive CBS domains span residues 587–653 (MRPR…QRQE) and 680–742 (LRRI…QDPE). ATP-binding positions include S597 and 618–620 (YNG). Positions 654 to 683 (GIVSNSIMYFTEEPPELPANSPHPLKLRRI) are required for localization in the endoplasmic reticulum. Position 725–728 (725–728 (TKKD)) interacts with ATP.

The protein belongs to the chloride channel (TC 2.A.49) family. ClC-4/CLCN4 subfamily. As to expression, predominantly present in excitable tissues such as nervous system and skeletal muscle. Not detected in heart.

The protein resides in the early endosome membrane. It localises to the late endosome membrane. The protein localises to the endoplasmic reticulum membrane. Its subcellular location is the lysosome membrane. It is found in the recycling endosome membrane. In terms of biological role, strongly outwardly rectifying, electrogenic H(+)/Cl(-)exchanger which mediates the exchange of chloride ions against protons. The CLC channel family contains both chloride channels and proton-coupled anion transporters that exchange chloride or another anion for protons. The presence of conserved gating glutamate residues is typical for family members that function as antiporters. This Mus musculus (Mouse) protein is H(+)/Cl(-) exchange transporter 4 (Clcn4).